The primary structure comprises 342 residues: Dihydroorotate dehydrogenase (quinone) (342 aa).

FMN contacts are provided by residues 61 to 65 (AGLDK) and Thr85. Lys65 lines the substrate pocket. Substrate is bound at residue 110–114 (NRMGF). FMN is bound by residues Asn138 and Asn171. Asn171 provides a ligand contact to substrate. Residue Ser174 is the Nucleophile of the active site. Asn176 is a substrate binding site. FMN contacts are provided by Lys216 and Thr244. 245–246 (NT) serves as a coordination point for substrate. FMN is bound by residues Gly267, Gly296, and 317 to 318 (YS).

It belongs to the dihydroorotate dehydrogenase family. Type 2 subfamily. Monomer. It depends on FMN as a cofactor.

The protein localises to the cell membrane. The catalysed reaction is (S)-dihydroorotate + a quinone = orotate + a quinol. The protein operates within pyrimidine metabolism; UMP biosynthesis via de novo pathway; orotate from (S)-dihydroorotate (quinone route): step 1/1. Catalyzes the conversion of dihydroorotate to orotate with quinone as electron acceptor. This chain is Dihydroorotate dehydrogenase (quinone), found in Pseudomonas aeruginosa (strain LESB58).